The primary structure comprises 66 residues: Panusin (66 aa).

A signal peptide spans 1-22; the sequence is MKTKAVLMLMLLVLVAATLVQG. A propeptide spanning residues 23 to 26 is cleaved from the precursor; the sequence is EPEP. 3 disulfides stabilise this stretch: Cys-32-Cys-54, Cys-39-Cys-61, and Cys-44-Cys-60. Residue Tyr-65 is modified to Tyrosine amide.

Forms dimers and higher-order oligomers. Contains 3 disulfide bonds.

Functionally, antimicrobial peptide. Has antibacterial activity against Gram-positive bacteria S.aureus ATCC 29737 and B.subtilis ATCC 6633 as well as against Gram-negative bacteria E.coli ATCC 10536 and K.pneumoniae ATCC 10031. This chain is Panusin, found in Panulirus argus (Caribbean spiny lobster).